Here is a 197-residue protein sequence, read N- to C-terminus: uncharacterized protein (197 aa).

Disordered stretches follow at residues M1–V30 and P115–L174. Residues K21–V30 are compositionally biased toward low complexity. The span at K123–E137 shows a compositional bias: acidic residues. The segment covering K157 to S170 has biased composition (basic residues).

This is an uncharacterized protein from Dictyostelium discoideum (Social amoeba).